Reading from the N-terminus, the 481-residue chain is DNA primase DnaG (481 aa).

The 75-residue stretch at 169 to 243 folds into the Toprim domain; it reads DAILVVEGRA…DVDYVARAPD (75 aa). Positions 175, 217, and 219 each coordinate Mg(2+). The disordered stretch occupies residues 275–393; the sequence is RRRNKLAAQA…ARKEREPSEF (119 aa). Over residues 281-309 the composition is skewed to low complexity; sequence AAQAAEKQAQAEAAQKAEAPAAAAPVQPQ. Residues 312 to 393 show a composition bias toward basic and acidic residues; the sequence is YQQKEYPQRE…ARKEREPSEF (82 aa).

This sequence belongs to the archaeal DnaG primase family. Forms a ternary complex with MCM helicase and DNA. Component of the archaeal exosome complex. It depends on Mg(2+) as a cofactor.

The enzyme catalyses ssDNA + n NTP = ssDNA/pppN(pN)n-1 hybrid + (n-1) diphosphate.. Its function is as follows. RNA polymerase that catalyzes the synthesis of short RNA molecules used as primers for DNA polymerase during DNA replication. Also part of the exosome, which is a complex involved in RNA degradation. Acts as a poly(A)-binding protein that enhances the interaction between heteromeric, adenine-rich transcripts and the exosome. This is DNA primase DnaG from Methanocella arvoryzae (strain DSM 22066 / NBRC 105507 / MRE50).